The following is a 352-amino-acid chain: Fatty acid desaturase (352 aa).

The next 2 helical transmembrane spans lie at 28-48 (SLIQLLNTFIPFFGLWFLAYL) and 55-75 (LLTLALTVIAAGFLTRIFIIF). The Histidine box-1 signature appears at 76-80 (HDCCH). The helical transmembrane segment at 89–109 (YNHILGFLTGVLTLFPYLQWQ) threads the bilayer. A Histidine box-2 motif is present at residues 112 to 116 (HSIHH). A run of 3 helical transmembrane segments spans residues 151–171 (LYRNPFIMFILGPIYVFLITN), 186–206 (TYLTNLAIVALAAACCLIFGW), and 209–229 (FLLVQGPIFLISGSIGVWLFY). The Histidine box-3 signature appears at 274 to 278 (HHVHH).

The protein belongs to the fatty acid desaturase type 1 family.

Its subcellular location is the cell membrane. It functions in the pathway lipid metabolism; fatty acid metabolism. Functionally, catalyzes the introduction of a cis-double bond at the delta(5) position of existing saturated fatty acids attached to membrane phospholipids. It is not strictly specific for palmitic acid (C16) but can also accept C14 as well as C18 species to yield unsaturated fatty acids. This chain is Fatty acid desaturase (des), found in Bacillus subtilis (strain 168).